The following is a 251-amino-acid chain: UPF0246 protein PEPE_1842 (251 aa).

Belongs to the UPF0246 family.

The chain is UPF0246 protein PEPE_1842 from Pediococcus pentosaceus (strain ATCC 25745 / CCUG 21536 / LMG 10740 / 183-1w).